A 91-amino-acid chain; its full sequence is Small ribosomal subunit protein bS18 (91 aa).

Residues 1–14 (MTNQNQSQTQTTQT) show a composition bias toward low complexity. Positions 1–24 (MTNQNQSQTQTTQTVEKVSSRQKK) are disordered.

This sequence belongs to the bacterial ribosomal protein bS18 family. Part of the 30S ribosomal subunit. Forms a tight heterodimer with protein bS6.

Functionally, binds as a heterodimer with protein bS6 to the central domain of the 16S rRNA, where it helps stabilize the platform of the 30S subunit. This Caldicellulosiruptor saccharolyticus (strain ATCC 43494 / DSM 8903 / Tp8T 6331) protein is Small ribosomal subunit protein bS18.